A 331-amino-acid chain; its full sequence is PHD finger protein 11 (331 aa).

Residues 42-78 form a C2HC pre-PHD-type zinc finger; sequence KRTCALCPKDVEYNVLYFAQSENIAAHENCLLYSSGL. The PHD-type zinc-finger motif lies at 108-160; the sequence is LKCKFCHKRGATVGCDLKNCNKNYHFFCAKKDDAVPQSDGVRGIYKLLCQQHA.

In terms of assembly, interacts with BRCA1 and RELA. In terms of tissue distribution, highly expressed in T and B-cells, as well as natural killer and mature dendritic cells. Expressed at higher levels in Th1 as compared to Th2 cells. Expressed at low levels in all normal tissues tested, including lung, testis, small intestine, breast, liver and placenta.

It localises to the nucleus. In terms of biological role, positive regulator of Th1-type cytokine gene expression. This chain is PHD finger protein 11 (PHF11), found in Homo sapiens (Human).